The chain runs to 351 residues: Large ribosomal subunit protein uL3 (351 aa).

Disordered regions lie at residues 1–31 (MGHR…TPRT) and 246–271 (KGSR…GQLG).

Belongs to the universal ribosomal protein uL3 family. Part of the 50S ribosomal subunit. Forms a cluster with proteins L14 and L24e.

In terms of biological role, one of the primary rRNA binding proteins, it binds directly near the 3'-end of the 23S rRNA, where it nucleates assembly of the 50S subunit. This Saccharolobus islandicus (strain M.16.27) (Sulfolobus islandicus) protein is Large ribosomal subunit protein uL3.